Consider the following 468-residue polypeptide: MSQDTLFDKVWDLHKVSRLPGGSDQILIGLHLIHEVTSPQAFGALKDKNLKVKFPDRTVATVDHIVPTDNQSRPFKDNLAEQMIETLEKNCLEHKIRFFNIGSGNQGIVHVVAPELGLTQPGMTIACGDSHTSTHGAFGSIAFGIGTSQVRDVLATQTIAMNKLKVRQIWCDNKLSKGVFAKDLVLHIINELGVKAGVGFAYEFAGPAIDELSMEERMTICNMSIEGGARCGYINPDEKTFSYIKDKLCAPKNEYWDKALTWWKSLKSDENSIYDDVIKLDASKVEPTVTWGITPGQSISINQQIPLLDDLSPNDKLVAKEAYEYMSFKPGQYIKDTPVDVCFIGSCTNGRISDLRVAARVLKNKKVSKNVKAFVVPGSEKVATEAKQEGLDEIFKDSGFQWREPGCSMCLAMNSDKLIGNQVSASSSNRNFKGRQGSPSGRTLLMSPAMVAAAAINGKVSDVREFIN.

3 residues coordinate [4Fe-4S] cluster: C347, C407, and C410.

Belongs to the aconitase/IPM isomerase family. LeuC type 1 subfamily. In terms of assembly, heterodimer of LeuC and LeuD. Requires [4Fe-4S] cluster as cofactor.

The enzyme catalyses (2R,3S)-3-isopropylmalate = (2S)-2-isopropylmalate. Its pathway is amino-acid biosynthesis; L-leucine biosynthesis; L-leucine from 3-methyl-2-oxobutanoate: step 2/4. Its function is as follows. Catalyzes the isomerization between 2-isopropylmalate and 3-isopropylmalate, via the formation of 2-isopropylmaleate. This chain is 3-isopropylmalate dehydratase large subunit, found in Prochlorococcus marinus (strain AS9601).